A 462-amino-acid chain; its full sequence is Cytochrome P450 20A1 (462 aa).

The helical transmembrane segment at 4-24 (FAIFAVTFLLALVGAVLYLYP) threads the bilayer. Position 409 (Cys-409) interacts with heme.

Belongs to the cytochrome P450 family. Heme serves as cofactor.

It localises to the membrane. This Mus musculus (Mouse) protein is Cytochrome P450 20A1 (Cyp20a1).